We begin with the raw amino-acid sequence, 209 residues long: Uracil phosphoribosyltransferase (209 aa).

5-phospho-alpha-D-ribose 1-diphosphate-binding positions include Arg-79, Arg-104, and Asp-131–Ser-139. Uracil is bound by residues Ile-194 and Gly-199–Ala-201. A 5-phospho-alpha-D-ribose 1-diphosphate-binding site is contributed by Asp-200.

This sequence belongs to the UPRTase family. The cofactor is Mg(2+).

It carries out the reaction UMP + diphosphate = 5-phospho-alpha-D-ribose 1-diphosphate + uracil. It participates in pyrimidine metabolism; UMP biosynthesis via salvage pathway; UMP from uracil: step 1/1. Its activity is regulated as follows. Allosterically activated by GTP. Its function is as follows. Catalyzes the conversion of uracil and 5-phospho-alpha-D-ribose 1-diphosphate (PRPP) to UMP and diphosphate. This chain is Uracil phosphoribosyltransferase, found in Listeria innocua serovar 6a (strain ATCC BAA-680 / CLIP 11262).